The following is a 563-amino-acid chain: Arginine--tRNA ligase (563 aa).

The 'HIGH' region signature appears at 120 to 130 (PNIAKPFHIGH).

It belongs to the class-I aminoacyl-tRNA synthetase family. Monomer.

The protein localises to the cytoplasm. It carries out the reaction tRNA(Arg) + L-arginine + ATP = L-arginyl-tRNA(Arg) + AMP + diphosphate. The protein is Arginine--tRNA ligase of Clostridium botulinum (strain ATCC 19397 / Type A).